We begin with the raw amino-acid sequence, 304 residues long: MTWRSLLIQNGGKLSLQRRQLLIQQNGESHTVPLEDIAVIIIENRETLITAPLLSALAEHGATLLTCDEQFLPCGQWLPYAQYHRQLKILKLQLNISEPLKKQLWQHIVRQKILNQAFVADETGNDLAAKRLRTLASEVRSGDTGNREAQAAALYFQALFGEKFTRNDNNAVNAALNYTYAVLRAAVARTLTLYGWLPALGLFHRSELNPFNLADDFIEPLRPLADLTVIHLYEQGRLKAELTPGIKQHLIKTLHYQISIERQHFSTLAAIDKMVSSFQAGVTDKNAKQLKLPEILPLKEYQYE.

The Mn(2+) site is built by E148, H204, and E219.

This sequence belongs to the CRISPR-associated endonuclease Cas1 family. As to quaternary structure, homodimer, forms a heterotetramer with a Cas2 homodimer. Mg(2+) is required as a cofactor. The cofactor is Mn(2+).

In terms of biological role, CRISPR (clustered regularly interspaced short palindromic repeat), is an adaptive immune system that provides protection against mobile genetic elements (viruses, transposable elements and conjugative plasmids). CRISPR clusters contain spacers, sequences complementary to antecedent mobile elements, and target invading nucleic acids. CRISPR clusters are transcribed and processed into CRISPR RNA (crRNA). Acts as a dsDNA endonuclease. Involved in the integration of spacer DNA into the CRISPR cassette. The sequence is that of CRISPR-associated endonuclease Cas1 from Neisseria meningitidis serogroup C (strain 8013).